The following is a 315-amino-acid chain: Calumenin (315 aa).

The N-terminal stretch at M1 to S19 is a signal peptide. Phosphotyrosine is present on Y47. T65 is modified (phosphothreonine). EF-hand domains are found at residues E68–K103, Y104–D139, P151–D186, M188–N223, W229–D264, and H265–S300. Phosphoserine is present on S69. Ca(2+) contacts are provided by D81, D83, D85, E92, D117, N119, D121, and E128. N131 carries N-linked (GlcNAc...) asparagine glycosylation. Residues D164, D166, D168, E175, D201, N203, D205, E212, D242, N244, D246, K248, and E253 each coordinate Ca(2+). The residue at position 254 (T254) is a Phosphothreonine. 2 positions are modified to phosphoserine: S261 and S277. Residues D278, D280, D282, K284, and E289 each contribute to the Ca(2+) site. The short motif at H312–F315 is the Prevents secretion from ER element.

This sequence belongs to the CREC family. As to quaternary structure, binds crotoxin. Interacts with GGCX.

The protein localises to the endoplasmic reticulum membrane. Its subcellular location is the golgi apparatus. The protein resides in the secreted. It localises to the melanosome. It is found in the sarcoplasmic reticulum lumen. Its function is as follows. Involved in regulation of vitamin K-dependent carboxylation of multiple N-terminal glutamate residues. Seems to inhibit gamma-carboxylase GGCX. Binds 7 calcium ions with a low affinity. The protein is Calumenin (Calu) of Rattus norvegicus (Rat).